A 392-amino-acid polypeptide reads, in one-letter code: NDP-glycosyltransferase YjiC (392 aa).

UDP contacts are provided by residues asparagine 18, threonine 229, serine 255, valine 278, histidine 293, and 297 to 301 (NSTME).

Belongs to the UDP-glycosyltransferase family. In terms of assembly, monomer.

The catalysed reaction is an NDP-glycose + an acceptor = a glycosylated acceptor + NDP.. Activity is improved in the presence of Mn(2+), Mg(2+) and Ca(2+), and inhibited by Ni(2+), Zn(2+) and Cu(2+). Glycosyltransferase that can glycosylate a wide range of substrates, including various flavonoids, phenyl ketones, curcuminoid, lignins, zingerone, triterpenes, stilbene and anthraquinone, using UDP-glucose or ADP-glucose as sugar donor. It also exhibits O-, N- and S-glycosylation activities towards simple aromatics. In vivo, the broad acceptor tolerance of YjiC might function as a detoxification agent against exogenous xenobiotics to make the strain adaptable to the changeable environment. The polypeptide is NDP-glycosyltransferase YjiC (yjiC) (Bacillus subtilis (strain 168)).